The sequence spans 935 residues: Peptidyl-glycine alpha-amidating monooxygenase A (935 aa).

An N-terminal signal peptide occupies residues Met1 to Thr36. The interval Met1–Gln390 is peptidylglycine alpha-hydroxylating monooxygenase. Topologically, residues Arg37 to Phe825 are intragranular. Intrachain disulfides connect Cys43-Cys182, Cys77-Cys122, Cys110-Cys127, Cys223-Cys330, and Cys289-Cys311. Cu(2+) is bound by residues His103 and His104. The Cu(2+) site is built by His168, His238, His240, and Met310. The disordered stretch occupies residues His362 to Glu385. The segment at Asp391 to Val712 is peptidyl-alpha-hydroxyglycine alpha-amidating lyase. Arg426 provides a ligand contact to a protein. 3 NHL repeats span residues Ser463–Gly504, Leu512–Asn557, and Gly565–Glu609. 2 cysteine pairs are disulfide-bonded: Cys526-Cys547 and Cys594-Cys605. The a protein site is built by Tyr546 and Arg598. N-linked (GlcNAc...) asparagine glycosylation occurs at Asn658. One copy of the NHL 4 repeat lies at Gly662–Ser705. Residues Phe728–Gln751 show a composition bias toward basic and acidic residues. Disordered regions lie at residues Phe728–Lys764 and Gln778–Lys812. N-linked (GlcNAc...) asparagine glycosylation occurs at Asn739. Over residues Asn755–Lys764 the composition is skewed to polar residues. A helical membrane pass occupies residues Val826–Ile846. Over Arg847 to Ser935 the chain is Cytoplasmic. A disordered region spans residues Lys896–Ser935. Residues Glu909 to Tyr922 show a composition bias toward acidic residues. The segment covering Pro925–Ser935 has biased composition (pro residues).

The protein in the C-terminal section; belongs to the peptidyl-alpha-hydroxyglycine alpha-amidating lyase family. In the N-terminal section; belongs to the copper type II ascorbate-dependent monooxygenase family. In terms of assembly, monomer. It depends on Zn(2+) as a cofactor. The cofactor is Cu(2+).

It localises to the cytoplasmic vesicle. The protein resides in the secretory vesicle membrane. It catalyses the reaction a [peptide]-C-terminal glycine + 2 L-ascorbate + O2 = a [peptide]-C-terminal (2S)-2-hydroxyglycine + 2 monodehydro-L-ascorbate radical + H2O. The enzyme catalyses a [peptide]-C-terminal (2S)-2-hydroxyglycine = a [peptide]-C-terminal amide + glyoxylate. Bifunctional enzyme that catalyzes amidation of the C-terminus of proteins. Alpha-amidation is present at the C-terminus of many endocrine hormones and neuropeptides and is required for their activity. C-terminal amidation also takes place in response to protein fragmentation triggered by oxidative stress, promoting degradation of amidated protein fragments by the proteasome. Alpha-amidation involves two sequential reactions, both of which are catalyzed by separate catalytic domains of the enzyme. The first step, catalyzed by peptidyl alpha-hydroxylating monooxygenase (PHM) domain, is the copper-, ascorbate-, and O2- dependent stereospecific hydroxylation (with S stereochemistry) at the alpha-carbon (C-alpha) of the C-terminal glycine of the peptidylglycine substrate. The second step, catalyzed by the peptidylglycine amidoglycolate lyase (PAL) domain, is the zinc-dependent cleavage of the N-C-alpha bond, producing the alpha-amidated peptide and glyoxylate. This chain is Peptidyl-glycine alpha-amidating monooxygenase A (pam-a), found in Xenopus laevis (African clawed frog).